Here is a 246-residue protein sequence, read N- to C-terminus: Type III pantothenate kinase (246 aa).

6-13 (DVGNSRIK) provides a ligand contact to ATP. Residues Tyr-93 and 100 to 103 (GSDR) contribute to the substrate site. Asp-102 serves as the catalytic Proton acceptor. An ATP-binding site is contributed by Thr-125. Thr-175 contacts substrate.

Belongs to the type III pantothenate kinase family. Homodimer. NH4(+) is required as a cofactor. It depends on K(+) as a cofactor.

It is found in the cytoplasm. The enzyme catalyses (R)-pantothenate + ATP = (R)-4'-phosphopantothenate + ADP + H(+). Its pathway is cofactor biosynthesis; coenzyme A biosynthesis; CoA from (R)-pantothenate: step 1/5. Its function is as follows. Catalyzes the phosphorylation of pantothenate (Pan), the first step in CoA biosynthesis. This chain is Type III pantothenate kinase, found in Dichelobacter nodosus (strain VCS1703A).